The primary structure comprises 210 residues: High mobility group protein B2 (210 aa).

Lys3 is subject to N6-acetyllysine. Residues 9-79 (PRGKMSSYAF…RYDREMKNYV (71 aa)) constitute a DNA-binding region (HMG box 1). A Cysteine sulfonic acid (-SO3H); alternate modification is found at Cys23. An intrachain disulfide couples Cys23 to Cys45. Lys30 bears the N6-acetyllysine mark. Ser35 is subject to Phosphoserine. Position 43 is an N6-acetyllysine (Lys43). The residue at position 45 (Cys45) is a Cysteine sulfonic acid (-SO3H); alternate. The interval 71 to 102 (YDREMKNYVPPKGDKKGKKKDPNAPKRPPSAF) is disordered. Lys90 carries the N6-acetyllysine modification. The segment at residues 95–163 (PKRPPSAFFL…KYEKDIAAYR (69 aa)) is a DNA-binding region (HMG box 2). Ser100 is modified (phosphoserine). Cys106 bears the Cysteine sulfonic acid (-SO3H) mark. Lys114 and Lys141 each carry N6-acetyllysine. Residues 162–172 (YRAKGKSEAGK) are compositionally biased toward basic and acidic residues. The tract at residues 162 to 210 (YRAKGKSEAGKKGPGRPTGSKKKNEPEDEEEEEEEEEEEDDEEEEEDEE) is disordered. The required for chemotactic activity stretch occupies residues 165–180 (KGKSEAGKKGPGRPTG). The span at 187-210 (PEDEEEEEEEEEEEDDEEEEEDEE) shows a compositional bias: acidic residues.

It belongs to the HMGB family. Interacts with POU2F2, POU2F1 and POU3F1. Component of the RAG complex composed of core components RAG1 and RAG2, and associated component HMGB1 or HMGB2. Component of the SET complex, composed of at least ANP32A, APEX1, HMGB2, NME1, SET and TREX1. Directly interacts with SET. Interacts with LEF1. Reduction/oxidation of cysteine residues Cys-23, Cys-45 and Cys-106 and a possible intramolecular disulfide bond involving Cys-23 and Cys-45 give rise to different redox forms with specific functional activities in various cellular compartments: 1- fully reduced HMGB2 (HMGB2C23hC45hC106h), 2- disulfide HMGB2 (HMGB2C23-C45C106h) and 3- sulfonyl HMGB2 (HMGB2C23soC45soC106so). Widely expressed in embryo. In adult mainly expressed in lymphoid organs and testes. Expressed in primary spermatocytes. Expressed in the superficial zone of articular cartilage.

It localises to the nucleus. The protein localises to the chromosome. Its subcellular location is the cytoplasm. It is found in the secreted. Its function is as follows. Multifunctional protein with various roles in different cellular compartments. May act in a redox sensitive manner. In the nucleus is an abundant chromatin-associated non-histone protein involved in transcription, chromatin remodeling and V(D)J recombination and probably other processes. Binds DNA with a preference to non-canonical DNA structures such as single-stranded DNA. Can bent DNA and enhance DNA flexibility by looping thus providing a mechanism to promote activities on various gene promoters by enhancing transcription factor binding and/or bringing distant regulatory sequences into close proximity. Involved in V(D)J recombination by acting as a cofactor of the RAG complex: acts by stimulating cleavage and RAG protein binding at the 23 bp spacer of conserved recombination signal sequences (RSS). Proposed to be involved in the innate immune response to nucleic acids by acting as a cytoplasmic promiscuous immunogenic DNA/RNA sensor which cooperates with subsequent discriminative sensing by specific pattern recognition receptors. In the extracellular compartment acts as a chemokine. Promotes proliferation and migration of endothelial cells implicating AGER/RAGE. Has antimicrobial activity in gastrointestinal epithelial tissues. Involved in inflammatory response to antigenic stimulus coupled with pro-inflammatory activity. May play a role in germ cell differentiation. Involved in modulation of neurogenesis probably by regulation of neural stem proliferation. Involved in articular cartilage surface maintenance implicating LEF1 and the Wnt/beta-catenin pathway. In Mus musculus (Mouse), this protein is High mobility group protein B2 (Hmgb2).